The chain runs to 132 residues: Translation initiation factor 5A (132 aa).

Position 36 is a hypusine (Lys-36).

It belongs to the eIF-5A family.

The protein localises to the cytoplasm. Functionally, functions by promoting the formation of the first peptide bond. The polypeptide is Translation initiation factor 5A (eIF5A) (Pyrobaculum neutrophilum (strain DSM 2338 / JCM 9278 / NBRC 100436 / V24Sta) (Thermoproteus neutrophilus)).